Reading from the N-terminus, the 443-residue chain is MAKKYFGTDGIRGAVNSKNINGDMFFKFGLATGTYFKTQKKKKQIAIIAKDTRLSGYSLEPALVSGLTSAGMHVYTLGPLPTNGLAMLTKSMKANMGIMITASHNPYHDNGLKLFGPDGLKLSNKIEKKIETLIDQKIEKSLSKPKKLGRVKRLETANKDYIKILKNNLPKDFNLRGLRIVIDCANGAGYKAGPELLKSLGAKVFSIGINPNGLNINKNCGSTFPNKIRLAVKRYKAHIGISLDGDADRIIMCDEKGIVIDGDQIIAAIAMRWKRKKMLKGGVVGTLMSNYGLEKFFKLHNIKFLRSNVGDRFVKEKMQKNNFNLGGEQSGHIILGKFATTGDGLLVALEVLFSLRKGKKASSFFNTFNKTPQILENIDVKDKNIIKNIDIKNSIKLAEKLIKGQGRILVRSSGTESKIRVMGESDNIKLLQKCLKIVLRKIK.

Catalysis depends on S103, which acts as the Phosphoserine intermediate. Mg(2+)-binding residues include S103, D244, D246, and D248. Phosphoserine is present on S103.

Belongs to the phosphohexose mutase family. Requires Mg(2+) as cofactor. In terms of processing, activated by phosphorylation.

It catalyses the reaction alpha-D-glucosamine 1-phosphate = D-glucosamine 6-phosphate. Its function is as follows. Catalyzes the conversion of glucosamine-6-phosphate to glucosamine-1-phosphate. The chain is Phosphoglucosamine mutase from Pelagibacter ubique (strain HTCC1062).